The chain runs to 382 residues: UDP-N-acetylglucosamine--N-acetylmuramyl-(pentapeptide) pyrophosphoryl-undecaprenol N-acetylglucosamine transferase (382 aa).

Residues Thr22 to Gly24, Asn134, Arg186, Ser212, Ala285 to Glu290, and Gln311 contribute to the UDP-N-acetyl-alpha-D-glucosamine site.

This sequence belongs to the glycosyltransferase 28 family. MurG subfamily.

The protein resides in the cell inner membrane. The catalysed reaction is di-trans,octa-cis-undecaprenyl diphospho-N-acetyl-alpha-D-muramoyl-L-alanyl-D-glutamyl-meso-2,6-diaminopimeloyl-D-alanyl-D-alanine + UDP-N-acetyl-alpha-D-glucosamine = di-trans,octa-cis-undecaprenyl diphospho-[N-acetyl-alpha-D-glucosaminyl-(1-&gt;4)]-N-acetyl-alpha-D-muramoyl-L-alanyl-D-glutamyl-meso-2,6-diaminopimeloyl-D-alanyl-D-alanine + UDP + H(+). Its pathway is cell wall biogenesis; peptidoglycan biosynthesis. Functionally, cell wall formation. Catalyzes the transfer of a GlcNAc subunit on undecaprenyl-pyrophosphoryl-MurNAc-pentapeptide (lipid intermediate I) to form undecaprenyl-pyrophosphoryl-MurNAc-(pentapeptide)GlcNAc (lipid intermediate II). This chain is UDP-N-acetylglucosamine--N-acetylmuramyl-(pentapeptide) pyrophosphoryl-undecaprenol N-acetylglucosamine transferase, found in Pseudoalteromonas atlantica (strain T6c / ATCC BAA-1087).